A 542-amino-acid polypeptide reads, in one-letter code: Hydroxylamine reductase (542 aa).

Positions 3, 6, 15, and 21 each coordinate [4Fe-4S] cluster. Hybrid [4Fe-2O-2S] cluster-binding residues include histidine 238, glutamate 262, cysteine 307, cysteine 398, cysteine 426, cysteine 451, glutamate 485, and lysine 487. Cysteine 398 bears the Cysteine persulfide mark.

This sequence belongs to the HCP family. The cofactor is [4Fe-4S] cluster. Hybrid [4Fe-2O-2S] cluster is required as a cofactor.

The protein resides in the cytoplasm. The catalysed reaction is A + NH4(+) + H2O = hydroxylamine + AH2 + H(+). Catalyzes the reduction of hydroxylamine to form NH(3) and H(2)O. The sequence is that of Hydroxylamine reductase from Microcystis aeruginosa (strain NIES-843 / IAM M-2473).